The chain runs to 1575 residues: Laminin subunit gamma-3 (1575 aa).

Positions 1–19 (MAAAALLLGLALLAPRAAG) are cleaved as a signal peptide. The Laminin N-terminal domain maps to 31–270 (RPQRCLPVFE…AVSDFSVGGR (240 aa)). N87 and N119 each carry an N-linked (GlcNAc...) asparagine glycan. Intrachain disulfides connect C271–C280, C273–C290, C292–C301, C304–C324, C327–C336, C329–C352, C355–C364, C367–C380, C383–C395, C385–C401, C403–C412, C415–C427, C430–C441, C432–C448, C450–C459, and C462–C477. 4 Laminin EGF-like domains span residues 271–326 (CKCN…ECLP), 327–382 (CNCS…PCQP), 383–429 (CDCQ…GCRP), and 430–479 (CTCN…GCSS). N295 is a glycosylation site (N-linked (GlcNAc...) asparagine). A glycan (N-linked (GlcNAc...) asparagine) is linked at N328. Positions 480–489 (CFCYGHSKVC) constitute a Laminin EGF-like 5; first part domain. A Laminin IV type A domain is found at 499–672 (HILSDFHQGA…LSPPASWVEI (174 aa)). A glycan (N-linked (GlcNAc...) asparagine) is linked at N631. Residues 673 to 706 (CSCPTGYTGQFCESCAPGYKREMPQGGPYASCVP) enclose the Laminin EGF-like 5; second part domain. 24 cysteine pairs are disulfide-bonded: C707–C715, C709–C722, C724–C733, C736–C752, C755–C763, C757–C774, C777–C786, C789–C807, C810–C824, C812–C831, C834–C843, C846–C863, C866–C880, C868–C887, C889–C898, C901–C914, C917–C929, C919–C936, C938–C947, C950–C962, C965–C977, C967–C983, C985–C994, and C997–C1010. 6 Laminin EGF-like domains span residues 707–754 (CTCN…DCQP), 755–809 (CPCP…PCHQ), 810–865 (CQCS…KCMP), 866–916 (CSCH…GCRS), 917–964 (CKCH…GCRA), and 965–1013 (CRCS…CQQC). N-linked (GlcNAc...) asparagine glycosylation occurs at N837. N-linked (GlcNAc...) asparagine glycosylation occurs at N980. The segment at 1014–1575 (PSCYALVKEE…SLPENCASWQ (562 aa)) is domain II and I. A Cell attachment site motif is present at residues 1059-1061 (RGD). Residues 1073-1134 (REAFLEQMMS…SEEEILHAAA (62 aa)) are a coiled coil. A glycan (N-linked (GlcNAc...) asparagine) is linked at N1185. A coiled-coil region spans residues 1201–1228 (LETQRDLEDRYQEVQAAQKALRTAVAEV). The disordered stretch occupies residues 1378–1399 (KQAERMLGNAAPLSSSAKKKGR). Coiled coils occupy residues 1410–1492 (KLAK…LARL) and 1523–1567 (GSLQ…LHSL).

Laminin is a complex glycoprotein, consisting of three different polypeptide chains (alpha, beta, gamma), which are bound to each other by disulfide bonds into a cross-shaped molecule comprising one long and three short arms with globules at each end. Gamma-3 is a subunit of laminin-12 (laminin-213), laminin-14 (laminin-423) and laminin-15 (laminin-523). In terms of tissue distribution, broadly expressed in: skin, heart, lung, and the reproductive tracts.

The protein localises to the secreted. It localises to the extracellular space. It is found in the extracellular matrix. Its subcellular location is the basement membrane. Functionally, binding to cells via a high affinity receptor, laminin is thought to mediate the attachment, migration and organization of cells into tissues during embryonic development by interacting with other extracellular matrix components. In Homo sapiens (Human), this protein is Laminin subunit gamma-3 (LAMC3).